Reading from the N-terminus, the 185-residue chain is Ribosome-recycling factor (185 aa).

The protein belongs to the RRF family.

The protein localises to the cytoplasm. Its function is as follows. Responsible for the release of ribosomes from messenger RNA at the termination of protein biosynthesis. May increase the efficiency of translation by recycling ribosomes from one round of translation to another. This chain is Ribosome-recycling factor, found in Rhodococcus erythropolis (strain PR4 / NBRC 100887).